Reading from the N-terminus, the 223-residue chain is Probable transaldolase (223 aa).

The Schiff-base intermediate with substrate role is filled by lysine 91.

The protein belongs to the transaldolase family. Type 3B subfamily.

The protein resides in the cytoplasm. The enzyme catalyses D-sedoheptulose 7-phosphate + D-glyceraldehyde 3-phosphate = D-erythrose 4-phosphate + beta-D-fructose 6-phosphate. Its pathway is carbohydrate degradation; pentose phosphate pathway; D-glyceraldehyde 3-phosphate and beta-D-fructose 6-phosphate from D-ribose 5-phosphate and D-xylulose 5-phosphate (non-oxidative stage): step 2/3. In terms of biological role, transaldolase is important for the balance of metabolites in the pentose-phosphate pathway. This Prosthecochloris aestuarii (strain DSM 271 / SK 413) protein is Probable transaldolase.